Here is a 350-residue protein sequence, read N- to C-terminus: RNA 3'-terminal phosphate cyclase (350 aa).

Residues glutamine 100 and 290 to 294 (FLGDQ) contribute to the ATP site. Histidine 314 acts as the Tele-AMP-histidine intermediate in catalysis.

This sequence belongs to the RNA 3'-terminal cyclase family. Type 1 subfamily.

It is found in the cytoplasm. It catalyses the reaction a 3'-end 3'-phospho-ribonucleotide-RNA + ATP = a 3'-end 2',3'-cyclophospho-ribonucleotide-RNA + AMP + diphosphate. Catalyzes the conversion of 3'-phosphate to a 2',3'-cyclic phosphodiester at the end of RNA. The mechanism of action of the enzyme occurs in 3 steps: (A) adenylation of the enzyme by ATP; (B) transfer of adenylate to an RNA-N3'P to produce RNA-N3'PP5'A; (C) and attack of the adjacent 2'-hydroxyl on the 3'-phosphorus in the diester linkage to produce the cyclic end product. The biological role of this enzyme is unknown but it is likely to function in some aspects of cellular RNA processing. In Thermococcus sibiricus (strain DSM 12597 / MM 739), this protein is RNA 3'-terminal phosphate cyclase.